Consider the following 554-residue polypeptide: MASQVSQMPSSSPLSSNKDEMRPKADFQPSIWGDLFLNCPDKNIDAETEKRHQQLKEEVRKMIVAPMANSTQKLAFIDSVQRLGVSYHFTKEIEDELENIYHNNNDAENDLYTTSIRFRLLREHGYNVSCDVFNKFKDEQGNFKSSVTSDVRGLLELYQASYLRVHGEDILDEAISFTTHHLSLAVASLDHPLSEEVSHALKQSIRRGLPRVEARHYLSVYQDIESHNKALLEFAKIDFNMLQFLHRKELSEICRWWKDLDFQRKLPYARDRVVEGYFWISGVYFEPQYSLGRKMLTKVIAMASIVDDTYDSYATYEELIPYTNAIERWDIKCIDEIPEYMKPSYKALLDVYEEMVQLVAEHGRQYRVEYAKNAMIRLAQSYLVEAKWTLQNYKPSFEEFKANALPTCGYAMLAITSFVGMGDIVTPETFKWAASDPKIIQASTIICRFMDDVAEHKFKHRREDDCSAIECYMEEYGVTAQEAYDVFNKHVESAWKDLNQEFLKPTEMPTEVLNRSLNLARVMDVLYREGDGYTYVGKAAKGGITSLLIEPIAL.

Residues 1-16 (MASQVSQMPSSSPLSS) show a composition bias toward low complexity. Positions 1–23 (MASQVSQMPSSSPLSSNKDEMRP) are disordered. The Mg(2+) site is built by aspartate 307, aspartate 311, aspartate 451, and glutamate 455. The DDXXD motif motif lies at 307 to 311 (DDTYD).

It belongs to the terpene synthase family. Mg(2+) serves as cofactor.

It carries out the reaction (2E,6E)-farnesyl diphosphate = (1S,8aR)-delta-cadinene + diphosphate. Its pathway is secondary metabolite biosynthesis; terpenoid biosynthesis. Responsible for the cyclization of trans,trans-farnesyl diphosphate (FPP) to (+)-delta cadinene. This chain is (+)-delta-cadinene synthase isozyme XC1, found in Gossypium arboreum (Tree cotton).